The sequence spans 125 residues: Large ribosomal subunit protein bL12 (125 aa).

The disordered stretch occupies residues 95–125 (APKPIKEGVDKKTAEEAKKKLEEAGAKAELK).

This sequence belongs to the bacterial ribosomal protein bL12 family. Homodimer. Part of the ribosomal stalk of the 50S ribosomal subunit. Forms a multimeric L10(L12)X complex, where L10 forms an elongated spine to which 2 to 4 L12 dimers bind in a sequential fashion. Binds GTP-bound translation factors.

Functionally, forms part of the ribosomal stalk which helps the ribosome interact with GTP-bound translation factors. Is thus essential for accurate translation. The sequence is that of Large ribosomal subunit protein bL12 from Polynucleobacter necessarius subsp. necessarius (strain STIR1).